Consider the following 344-residue polypeptide: uncharacterized protein (344 aa).

Topologically, residues 1-98 (MIDFVKSRDT…NNDEIGIWNY (98 aa)) are cytoplasmic. Residues 99-119 (ISVAEMGGVLLFLSYWIWTCL) traverse the membrane as a helical segment. Histidine 120 is a topological domain (lumenal). A helical transmembrane segment spans residues 121–141 (FSKIIFPAQKVICLYIFLFAL). The Cytoplasmic segment spans residues 142-169 (NQTLQECIEEYVFSSECIKYRQFYSVYE). A helical membrane pass occupies residues 170–192 (IIDFLRTNFYRLFVIYCALGFGI). Over 193–198 (TRTVPK) the chain is Lumenal. Residues 199-219 (YLMIKGISIVIALCSVYWISL) traverse the membrane as a helical segment. Residues 220–222 (YKD) are Cytoplasmic-facing. A helical transmembrane segment spans residues 223–243 (VYVVSEIFDMIQYEVFPAIWV). At 244-273 (YSICHLLKQCTSVTTYENASKARFFRRMLN) the chain is on the lumenal side. A helical transmembrane segment spans residues 274–294 (AFIFIFCASPMLHYLSNIIFG). Residues 295–344 (NFDYRLSVIIGDLFTFMEKIAFPCYIMFPTHNEALAYNRNVAEEAQEKMI) lie on the Cytoplasmic side of the membrane.

The protein localises to the endoplasmic reticulum membrane. This is an uncharacterized protein from Schizosaccharomyces pombe (strain 972 / ATCC 24843) (Fission yeast).